Reading from the N-terminus, the 542-residue chain is Chaperonin GroEL 1 (542 aa).

ATP-binding positions include 29–32 (TIGP), 86–90 (DGTTT), Gly415, 479–481 (NAA), and Asp495.

Belongs to the chaperonin (HSP60) family. In terms of assembly, forms a cylinder of 14 subunits composed of two heptameric rings stacked back-to-back. Interacts with the co-chaperonin GroES.

The protein localises to the cytoplasm. The enzyme catalyses ATP + H2O + a folded polypeptide = ADP + phosphate + an unfolded polypeptide.. In terms of biological role, together with its co-chaperonin GroES, plays an essential role in assisting protein folding. The GroEL-GroES system forms a nano-cage that allows encapsulation of the non-native substrate proteins and provides a physical environment optimized to promote and accelerate protein folding. The protein is Chaperonin GroEL 1 of Streptomyces avermitilis (strain ATCC 31267 / DSM 46492 / JCM 5070 / NBRC 14893 / NCIMB 12804 / NRRL 8165 / MA-4680).